A 254-amino-acid chain; its full sequence is Myeloblastin (254 aa).

The first 27 residues, Met1–Ala27, serve as a signal peptide directing secretion. A propeptide spanning residues Ser28–Lys29 is cleaved from the precursor. Positions Ile30–Arg250 constitute a Peptidase S1 domain. Cysteines 58 and 74 form a disulfide. Catalysis depends on charge relay system residues His73 and Asp120. 2 N-linked (GlcNAc...) asparagine glycosylation sites follow: Asn127 and Asn176. 3 disulfides stabilise this stretch: Cys154/Cys211, Cys184/Cys190, and Cys201/Cys226. The active-site Charge relay system is the Ser205. Residues Gly251 to Pro254 constitute a propeptide that is removed on maturation.

This sequence belongs to the peptidase S1 family. Elastase subfamily. As to quaternary structure, may form dimers. Interacts with CD177; the interaction tethers PRTN3 to the cell surface; the interaction is direct. Interacts with SERPINB1. Interacts with ADGRG3.

It is found in the lysosome. Its subcellular location is the secreted. The protein resides in the cell membrane. It localises to the membrane raft. It carries out the reaction Hydrolysis of proteins, including elastin, by preferential cleavage: -Ala-|-Xaa- &gt; -Val-|-Xaa-.. In terms of biological role, serine protease that degrades elastin, fibronectin, laminin, vitronectin, and collagen types I, III, and IV (in vitro). By cleaving and activating receptor F2RL1/PAR-2, enhances endothelial cell barrier function and thus vascular integrity during neutrophil transendothelial migration. May play a role in neutrophil transendothelial migration, probably when associated with CD177. Triggers inflammatory processes in neutrophils by interacting with ADGRG3 upstream of F2RL1/PAR2 activation. This chain is Myeloblastin (Prtn3), found in Mus musculus (Mouse).